Here is a 208-residue protein sequence, read N- to C-terminus: Small ribosomal subunit protein uS4 (208 aa).

The S4 RNA-binding domain maps to 98–168; that stretch reads RRLDNVVFRL…DSLDTVVRRG (71 aa).

It belongs to the universal ribosomal protein uS4 family. As to quaternary structure, part of the 30S ribosomal subunit. Contacts protein S5. The interaction surface between S4 and S5 is involved in control of translational fidelity.

In terms of biological role, one of the primary rRNA binding proteins, it binds directly to 16S rRNA where it nucleates assembly of the body of the 30S subunit. Its function is as follows. With S5 and S12 plays an important role in translational accuracy. The chain is Small ribosomal subunit protein uS4 from Desulforapulum autotrophicum (strain ATCC 43914 / DSM 3382 / VKM B-1955 / HRM2) (Desulfobacterium autotrophicum).